The following is a 527-amino-acid chain: Cytochrome P450 714B3 (527 aa).

The Lumenal segment spans residues 1–14 (MEVAMAMAVKVLLS). The chain crosses the membrane as a helical; Signal-anchor for type III membrane protein span at residues 15–35 (LCCVGACGLAVYLYHILWLVP). At 36 to 527 (QKVLAKFEDQ…SVCTKRGTAI (492 aa)) the chain is on the cytoplasmic side. Position 464 (Cys-464) interacts with heme.

This sequence belongs to the cytochrome P450 family. Requires heme as cofactor.

The protein localises to the membrane. May be involved in gibberellin metabolism. This chain is Cytochrome P450 714B3 (CYP714B3), found in Zea mays (Maize).